A 269-amino-acid chain; its full sequence is Auxin-responsive protein IAA26 (269 aa).

The segment covering 25 to 40 (YQEDKNNTDQEKKLEL) has biased composition (basic and acidic residues). 2 disordered regions span residues 25-55 (YQED…HSAI) and 76-146 (CFNG…KQVE). Residues 38 to 42 (LELRL) carry the EAR-like (transcriptional repression) motif. Polar residues-rich tracts occupy residues 80 to 93 (NHFS…SVPH) and 117 to 136 (LAST…GQIN). Basic and acidic residues predominate over residues 137–146 (KSDDGEKQVE). Residues 151–250 (GMFVKINMDG…SVKRLRVIKS (100 aa)) form the PB1 domain.

It belongs to the Aux/IAA family. As to quaternary structure, homodimers and heterodimers. Interacts with phytochrome A. Interacts with TPL.

The protein resides in the nucleus. Its function is as follows. Aux/IAA proteins are short-lived transcriptional factors that function as repressors of early auxin response genes at low auxin concentrations. Repression is thought to result from the interaction with auxin response factors (ARFs), proteins that bind to the auxin-responsive promoter element (AuxRE). Formation of heterodimers with ARF proteins may alter their ability to modulate early auxin response genes expression. The polypeptide is Auxin-responsive protein IAA26 (IAA26) (Arabidopsis thaliana (Mouse-ear cress)).